Here is a 159-residue protein sequence, read N- to C-terminus: NAD(P)H-quinone oxidoreductase subunit I, chloroplastic (159 aa).

2 4Fe-4S ferredoxin-type domains span residues 55 to 84 (GRIHFEFDKCIVCEVCVRVCPINLPVVDWN) and 95 to 124 (KNYSIDFGVCIFCGNCVEYCPTNCLSMTEE). Positions 64, 67, 70, 74, 104, 107, 110, and 114 each coordinate [4Fe-4S] cluster.

This sequence belongs to the complex I 23 kDa subunit family. In terms of assembly, NDH is composed of at least 16 different subunits, 5 of which are encoded in the nucleus. Requires [4Fe-4S] cluster as cofactor.

The protein localises to the plastid. The protein resides in the chloroplast thylakoid membrane. The catalysed reaction is a plastoquinone + NADH + (n+1) H(+)(in) = a plastoquinol + NAD(+) + n H(+)(out). It catalyses the reaction a plastoquinone + NADPH + (n+1) H(+)(in) = a plastoquinol + NADP(+) + n H(+)(out). In terms of biological role, NDH shuttles electrons from NAD(P)H:plastoquinone, via FMN and iron-sulfur (Fe-S) centers, to quinones in the photosynthetic chain and possibly in a chloroplast respiratory chain. The immediate electron acceptor for the enzyme in this species is believed to be plastoquinone. Couples the redox reaction to proton translocation, and thus conserves the redox energy in a proton gradient. This Chara vulgaris (Common stonewort) protein is NAD(P)H-quinone oxidoreductase subunit I, chloroplastic.